Reading from the N-terminus, the 165-residue chain is uncharacterized protein (165 aa).

Helical transmembrane passes span 7–27 (LWLA…QITV) and 141–161 (KGTP…IALL).

The protein resides in the cell membrane. This is an uncharacterized protein from Archaeoglobus fulgidus (strain ATCC 49558 / DSM 4304 / JCM 9628 / NBRC 100126 / VC-16).